Consider the following 237-residue polypeptide: tRNA(His) guanylyltransferase (237 aa).

Positions 29, 30, and 77 each coordinate Mg(2+). Residues 29 to 34 and 76 to 77 each bind GTP; these read DGKKFH and SD.

The protein belongs to the tRNA(His) guanylyltransferase family. Requires Mg(2+) as cofactor.

The catalysed reaction is a 5'-end ribonucleotide-tRNA(His) + GTP + ATP + H2O = a 5'-end phospho-guanosine-ribonucleotide-tRNA(His) + AMP + 2 diphosphate + H(+). In terms of biological role, adds a GMP to the 5'-end of tRNA(His) after transcription and RNase P cleavage. This chain is tRNA(His) guanylyltransferase (THG1), found in Kluyveromyces lactis (strain ATCC 8585 / CBS 2359 / DSM 70799 / NBRC 1267 / NRRL Y-1140 / WM37) (Yeast).